The sequence spans 433 residues: MLSYKKVLIVGRPNVGKSALFNRILDTKRSITESTYGVTRDLVEEVCKVDSFKFKLIDTGGFTILKDEISKIVVQKVLSSLEKVDLILLVLDINEILLEDYQIIERLRKYSSKVVLVLNKVDTKDKECLAHEFHNLGFKRYFLVSAAHCRGITKLRDFLKVEVGEVGIESGADIKVGIIGKPNSGKSTLINYLSGNEIAIVSDQPGTTRDFIKTKFTRNGKVFEVVDTAGIRRRARVNEIVEYYSVNRALKVIDMVDIVFLLIDVQEKLTSQDKKIAHYVTKKGKGIVIVFSKWDLVDESKGYFEALKSHVKFFFPILNFAPIFRISVHKRIGLDSLFKESFKLKDQLELKTSTPDLNKMLNLWIKDYHLNISHKIKYITQVSTNPVKFILFANKIKNFPNSYYNYLVNNLRKIGYKNIPILVELKEKIRDLK.

EngA-type G domains are found at residues 5–167 (KKVL…GEVG) and 174–349 (IKVG…DQLE). Residues 11 to 18 (GRPNVGKS), 58 to 62 (DTGGF), 119 to 122 (NKVD), 180 to 187 (GKPNSGKS), 227 to 231 (DTAGI), and 292 to 295 (SKWD) each bind GTP. The 81-residue stretch at 349–429 (ELKTSTPDLN…PILVELKEKI (81 aa)) folds into the KH-like domain.

It belongs to the TRAFAC class TrmE-Era-EngA-EngB-Septin-like GTPase superfamily. EngA (Der) GTPase family. As to quaternary structure, associates with the 50S ribosomal subunit.

In terms of biological role, GTPase that plays an essential role in the late steps of ribosome biogenesis. This is GTPase Der from Borreliella burgdorferi (strain ATCC 35210 / DSM 4680 / CIP 102532 / B31) (Borrelia burgdorferi).